The primary structure comprises 217 residues: Somatotropin (217 aa).

Positions 1–26 are cleaved as a signal peptide; that stretch reads MATGSRTSLLLAFGLLCLPWLQEGSA. His44 is a binding site for Zn(2+). A disulfide bond links Cys79 and Cys191. Ser132 is subject to Phosphoserine. Gln163 carries the post-translational modification Deamidated glutamine; by deterioration. Position 176 is a phosphoserine (Ser176). Asn178 is subject to Deamidated asparagine; by deterioration. Glu200 contacts Zn(2+). A disulfide bond links Cys208 and Cys215.

Belongs to the somatotropin/prolactin family. As to quaternary structure, monomer, dimer, trimer, tetramer and pentamer, disulfide-linked or non-covalently associated, in homomeric and heteromeric combinations. Can also form a complex either with GHBP or with the alpha2-macroglobulin complex.

The protein resides in the secreted. Its function is as follows. Plays an important role in growth control. Its major role in stimulating body growth is to stimulate the liver and other tissues to secrete IGF1. It stimulates both the differentiation and proliferation of myoblasts. It also stimulates amino acid uptake and protein synthesis in muscle and other tissues. This chain is Somatotropin (GH1), found in Homo sapiens (Human).